The sequence spans 312 residues: Methionyl-tRNA formyltransferase (312 aa).

Residue 117-120 (SLLP) participates in (6S)-5,6,7,8-tetrahydrofolate binding.

It belongs to the Fmt family.

The enzyme catalyses L-methionyl-tRNA(fMet) + (6R)-10-formyltetrahydrofolate = N-formyl-L-methionyl-tRNA(fMet) + (6S)-5,6,7,8-tetrahydrofolate + H(+). Attaches a formyl group to the free amino group of methionyl-tRNA(fMet). The formyl group appears to play a dual role in the initiator identity of N-formylmethionyl-tRNA by promoting its recognition by IF2 and preventing the misappropriation of this tRNA by the elongation apparatus. This is Methionyl-tRNA formyltransferase from Bordetella pertussis (strain Tohama I / ATCC BAA-589 / NCTC 13251).